A 265-amino-acid chain; its full sequence is Hydroxyethylthiazole kinase (265 aa).

Position 50 (M50) interacts with substrate. 2 residues coordinate ATP: R125 and T171. Substrate is bound at residue G198.

The protein belongs to the Thz kinase family. Requires Mg(2+) as cofactor.

It carries out the reaction 5-(2-hydroxyethyl)-4-methylthiazole + ATP = 4-methyl-5-(2-phosphooxyethyl)-thiazole + ADP + H(+). It functions in the pathway cofactor biosynthesis; thiamine diphosphate biosynthesis; 4-methyl-5-(2-phosphoethyl)-thiazole from 5-(2-hydroxyethyl)-4-methylthiazole: step 1/1. Its function is as follows. Catalyzes the phosphorylation of the hydroxyl group of 4-methyl-5-beta-hydroxyethylthiazole (THZ). The sequence is that of Hydroxyethylthiazole kinase from Salmonella paratyphi B (strain ATCC BAA-1250 / SPB7).